Reading from the N-terminus, the 381-residue chain is Tetraacyldisaccharide 4'-kinase (381 aa).

An ATP-binding site is contributed by 78-85 (AVGGTGKT).

It belongs to the LpxK family.

It catalyses the reaction a lipid A disaccharide + ATP = a lipid IVA + ADP + H(+). It functions in the pathway glycolipid biosynthesis; lipid IV(A) biosynthesis; lipid IV(A) from (3R)-3-hydroxytetradecanoyl-[acyl-carrier-protein] and UDP-N-acetyl-alpha-D-glucosamine: step 6/6. Its function is as follows. Transfers the gamma-phosphate of ATP to the 4'-position of a tetraacyldisaccharide 1-phosphate intermediate (termed DS-1-P) to form tetraacyldisaccharide 1,4'-bis-phosphate (lipid IVA). The sequence is that of Tetraacyldisaccharide 4'-kinase from Syntrophobacter fumaroxidans (strain DSM 10017 / MPOB).